The following is a 606-amino-acid chain: Transmembrane 9 superfamily member 1 (606 aa).

Residues 1–27 form the signal peptide; sequence MTVLGHPRSWSCRWWPLLLLLLLTGRE. The N-linked (GlcNAc...) asparagine glycan is linked to N178. 4 consecutive transmembrane segments (helical) span residues 237–257, 310–330, 339–359, and 373–393; these read LSII…AVIL, VLGV…MALL, GAIN…SGYV, and VWNI…TWSV. N-linked (GlcNAc...) asparagine glycosylation occurs at N401. Helical transmembrane passes span 412 to 432, 469 to 489, 499 to 519, and 535 to 555; these read ILLL…IGGI, VGGF…FATV, GILF…SIAL, and SVLS…FYYA. The N-linked (GlcNAc...) asparagine glycan is linked to N559. The chain crosses the membrane as a helical span at residues 570 to 590; that stretch reads FGYSLLTGYVFFLMLGTISFF.

Belongs to the nonaspanin (TM9SF) (TC 9.A.2) family.

The protein resides in the lysosome membrane. It is found in the cytoplasmic vesicle. Its subcellular location is the autophagosome membrane. In terms of biological role, plays an essential role in autophagy. The sequence is that of Transmembrane 9 superfamily member 1 (TM9SF1) from Bos taurus (Bovine).